A 264-amino-acid polypeptide reads, in one-letter code: Apolipoprotein A-I (264 aa).

An N-terminal signal peptide occupies residues 1–18 (MKAVVLTVAVFFLTGSQA). Tandem repeats lie at residues 67–88 (LKLL…EQIG) and 89–110 (PVTQ…QEMN). A 10 X approximate tandem repeats region spans residues 67-264 (LKLLDNWDSL…DEATKKLTTQ (198 aa)). The residue at position 109 (M109) is a Methionine sulfoxide. One copy of the 3; half-length repeat lies at 111-121 (KDLEEVKLKVQ). 3 repeat units span residues 122 to 143 (PYLD…QQVE), 144 to 165 (PLGT…EKLS), and 166 to 187 (PLGQ…THLA). The 7; truncated repeat unit spans residues 188 to 207 (PYSDELRQRLAARLEALKES). Residues 208-229 (SSLADYQAKATEHLSALGEKAK) form repeat 8. One copy of the 9; half-length repeat lies at 230-240 (PALEDLRQGLL). Residues 241-264 (PVLENLKMSFWSAVDEATKKLTTQ) form repeat 10.

Belongs to the apolipoprotein A1/A4/E family. As to quaternary structure, homodimer. Interacts with APOA1BP and CLU. Component of a sperm activating protein complex (SPAP), consisting of APOA1, an immunoglobulin heavy chain, an immunoglobulin light chain and albumin. Interacts with NDRG1. Interacts with SCGB3A2. Interacts with NAXE and YJEFN3. Glycosylated. In terms of processing, palmitoylated. Post-translationally, phosphorylation sites are present in the extracellular medium.

It localises to the secreted. Its function is as follows. Participates in the reverse transport of cholesterol from tissues to the liver for excretion by promoting cholesterol efflux from tissues and by acting as a cofactor for the lecithin cholesterol acyltransferase (LCAT). As part of the SPAP complex, activates spermatozoa motility. The protein is Apolipoprotein A-I (ApoA1) of Marmota monax (Woodchuck).